Reading from the N-terminus, the 452-residue chain is Pup--protein ligase (452 aa).

Position 9 (glutamate 9) interacts with Mg(2+). Arginine 53 serves as a coordination point for ATP. Tyrosine 55 contacts Mg(2+). Residue aspartate 57 is the Proton acceptor of the active site. Glutamate 63 provides a ligand contact to Mg(2+). Residues threonine 66 and tryptophan 419 each coordinate ATP.

This sequence belongs to the Pup ligase/Pup deamidase family. Pup-conjugating enzyme subfamily.

It catalyses the reaction ATP + [prokaryotic ubiquitin-like protein]-L-glutamate + [protein]-L-lysine = ADP + phosphate + N(6)-([prokaryotic ubiquitin-like protein]-gamma-L-glutamyl)-[protein]-L-lysine.. The protein operates within protein degradation; proteasomal Pup-dependent pathway. It participates in protein modification; protein pupylation. Catalyzes the covalent attachment of the prokaryotic ubiquitin-like protein modifier Pup to the proteasomal substrate proteins, thereby targeting them for proteasomal degradation. This tagging system is termed pupylation. The ligation reaction involves the side-chain carboxylate of the C-terminal glutamate of Pup and the side-chain amino group of a substrate lysine. The protein is Pup--protein ligase of Thermobifida fusca (strain YX).